Consider the following 89-residue polypeptide: Small ribosomal subunit protein uS15 (89 aa).

Belongs to the universal ribosomal protein uS15 family. Part of the 30S ribosomal subunit. Forms a bridge to the 50S subunit in the 70S ribosome, contacting the 23S rRNA.

Its function is as follows. One of the primary rRNA binding proteins, it binds directly to 16S rRNA where it helps nucleate assembly of the platform of the 30S subunit by binding and bridging several RNA helices of the 16S rRNA. In terms of biological role, forms an intersubunit bridge (bridge B4) with the 23S rRNA of the 50S subunit in the ribosome. The sequence is that of Small ribosomal subunit protein uS15 from Mycolicibacterium smegmatis (strain ATCC 700084 / mc(2)155) (Mycobacterium smegmatis).